The sequence spans 210 residues: Putative cutinase (210 aa).

Residues 26–38 are compositionally biased toward basic and acidic residues; it reads DSERLPLKRDEPG. A disordered region spans residues 26–58; sequence DSERLPLKRDEPGSRSMRSTFIPSSQCSNLSSA. Positions 49–58 are enriched in low complexity; sequence SSQCSNLSSA.

The catalysed reaction is cutin + H2O = cutin monomers.. This Phytophthora capsici protein is Putative cutinase.